A 393-amino-acid polypeptide reads, in one-letter code: Acetate kinase (393 aa).

Residue asparagine 10 coordinates Mg(2+). Lysine 17 contacts ATP. Position 89 (arginine 89) interacts with substrate. Aspartate 146 serves as the catalytic Proton donor/acceptor. ATP contacts are provided by residues 204-208 (HLGNG), 278-280 (DMR), and 323-327 (GVGEN). Glutamate 376 contributes to the Mg(2+) binding site.

It belongs to the acetokinase family. Homodimer. Mg(2+) is required as a cofactor. The cofactor is Mn(2+).

It localises to the cytoplasm. The catalysed reaction is acetate + ATP = acetyl phosphate + ADP. Its pathway is metabolic intermediate biosynthesis; acetyl-CoA biosynthesis; acetyl-CoA from acetate: step 1/2. Functionally, catalyzes the formation of acetyl phosphate from acetate and ATP. Can also catalyze the reverse reaction. In Mycoplasma genitalium (strain ATCC 33530 / DSM 19775 / NCTC 10195 / G37) (Mycoplasmoides genitalium), this protein is Acetate kinase.